Reading from the N-terminus, the 298-residue chain is uncharacterized protein (298 aa).

Transmembrane regions (helical) follow at residues 5–25 (ILFG…MSAF), 36–56 (MENV…IYPF), 76–96 (VVVG…ISLA), 97–117 (TATA…PLLL), 124–144 (STLI…DPSV), 147–167 (VGPV…LAYI), 181–201 (VILA…FIDI), 216–236 (ILWI…LTYA), 244–264 (IIAP…LYLG), and 272–292 (SSLG…PALL). Residues 17 to 141 (LCFGIMSAFV…GIVGVVLISD (125 aa)) form the EamA 1 domain. Residues 183-288 (LAFAFGMSLL…ILCSGLLIAL (106 aa)) enclose the EamA 2 domain.

Belongs to the EamA transporter family.

Its subcellular location is the cell membrane. This is an uncharacterized protein from Helicobacter pylori (strain ATCC 700392 / 26695) (Campylobacter pylori).